The chain runs to 101 residues: NADH-ubiquinone oxidoreductase chain 5 (101 aa).

The next 3 helical transmembrane spans lie at 12–32 (IALF…SGVI), 48–68 (FLFI…FICF), and 79–99 (LVIY…LFII).

This sequence belongs to the complex I subunit 5 family.

The protein resides in the mitochondrion inner membrane. The enzyme catalyses a ubiquinone + NADH + 5 H(+)(in) = a ubiquinol + NAD(+) + 4 H(+)(out). Core subunit of the mitochondrial membrane respiratory chain NADH dehydrogenase (Complex I) that is believed to belong to the minimal assembly required for catalysis. Complex I functions in the transfer of electrons from NADH to the respiratory chain. The immediate electron acceptor for the enzyme is believed to be ubiquinone. In Leishmania tarentolae (Sauroleishmania tarentolae), this protein is NADH-ubiquinone oxidoreductase chain 5 (ND5).